A 152-amino-acid chain; its full sequence is Ribonuclease H (152 aa).

In terms of domain architecture, RNase H type-1 spans 1–142 (MGSKVVIYTD…ADKLAVQGRE (142 aa)). Aspartate 10, glutamate 48, aspartate 70, and aspartate 134 together coordinate Mg(2+).

It belongs to the RNase H family. Monomer. The cofactor is Mg(2+).

The protein resides in the cytoplasm. It carries out the reaction Endonucleolytic cleavage to 5'-phosphomonoester.. Its function is as follows. Endonuclease that specifically degrades the RNA of RNA-DNA hybrids. The chain is Ribonuclease H from Rickettsia massiliae (strain Mtu5).